A 154-amino-acid polypeptide reads, in one-letter code: SKP1-like protein 13 (154 aa).

An interaction with the F-box domain of F-box proteins region spans residues 96-154 (MLAANYLNIKDLLDLGCQTVADMITGKKPDEIRALLGIENDFTPEEEEEIRKENQWAFE).

This sequence belongs to the SKP1 family. As to quaternary structure, part of a SCF (SKP1-cullin-F-box) protein ligase complex. Interacts with ADO3/FKF1, EBF1, PP2A13, SKIP15, SKIP16, CPR1/CPR30, At1g55000, At3g61590, At1g67340, At1g78100, At3g04660, At4g38940, At4g39550 and At5g49610. In terms of tissue distribution, mostly expressed in inflorescences, and, to a lower extent, in seedlings and siliques. Also detected in cotyledons, leaves, pollen and seeds.

It localises to the nucleus. Its pathway is protein modification; protein ubiquitination. Involved in ubiquitination and subsequent proteasomal degradation of target proteins. Together with CUL1, RBX1 and a F-box protein, it forms a SCF E3 ubiquitin ligase complex. The functional specificity of this complex depends on the type of F-box protein. In the SCF complex, it serves as an adapter that links the F-box protein to CUL1. This chain is SKP1-like protein 13 (ASK13), found in Arabidopsis thaliana (Mouse-ear cress).